The following is a 576-amino-acid chain: Rop guanine nucleotide exchange factor 13 (576 aa).

The PRONE domain occupies 119–485; sequence KSCYFAYVTE…QLTQNPELAM (367 aa). Positions 557–570 are enriched in polar residues; sequence KTTYLESLGTTRSP. Residues 557 to 576 form a disordered region; sequence KTTYLESLGTTRSPTAGRYS.

Interacts with PRK6. Specifically expressed in mature flowers.

In terms of biological role, guanine-nucleotide exchange factor (GEF) that acts as an activator of Rop (Rho of plants) GTPases by promoting the exchange of GDP for GTP. The chain is Rop guanine nucleotide exchange factor 13 from Arabidopsis thaliana (Mouse-ear cress).